A 644-amino-acid polypeptide reads, in one-letter code: Exoribonuclease 2 (644 aa).

The region spanning 189–516 is the RNB domain; it reads REDLTSLDFV…NHRLLKAVIK (328 aa). An S1 motif domain is found at 561 to 643; sequence GTRFAAEIVD…ETRSIIARPV (83 aa).

This sequence belongs to the RNR ribonuclease family. RNase II subfamily.

The protein localises to the cytoplasm. The enzyme catalyses Exonucleolytic cleavage in the 3'- to 5'-direction to yield nucleoside 5'-phosphates.. Involved in mRNA degradation. Hydrolyzes single-stranded polyribonucleotides processively in the 3' to 5' direction. The protein is Exoribonuclease 2 of Shigella flexneri.